Reading from the N-terminus, the 491-residue chain is Ketol-acid reductoisomerase (NADP(+)) (491 aa).

The region spanning 15–208 (AQLGKCRFMG…GGHRAGVLES (194 aa)) is the KARI N-terminal Rossmann domain. NADP(+) is bound by residues 45–48 (CGAQ), Arg-68, Arg-76, Ser-78, and 108–110 (DKQ). The active site involves His-132. Gly-158 is a binding site for NADP(+). 2 consecutive KARI C-terminal knotted domains span residues 209 to 344 (SFVA…TAPQ) and 345 to 484 (YEGK…MTDM). Mg(2+) is bound by residues Asp-217, Glu-221, Glu-389, and Glu-393. Ser-414 contributes to the substrate binding site.

The protein belongs to the ketol-acid reductoisomerase family. Mg(2+) is required as a cofactor.

It carries out the reaction (2R)-2,3-dihydroxy-3-methylbutanoate + NADP(+) = (2S)-2-acetolactate + NADPH + H(+). The catalysed reaction is (2R,3R)-2,3-dihydroxy-3-methylpentanoate + NADP(+) = (S)-2-ethyl-2-hydroxy-3-oxobutanoate + NADPH + H(+). Its pathway is amino-acid biosynthesis; L-isoleucine biosynthesis; L-isoleucine from 2-oxobutanoate: step 2/4. It functions in the pathway amino-acid biosynthesis; L-valine biosynthesis; L-valine from pyruvate: step 2/4. Its function is as follows. Involved in the biosynthesis of branched-chain amino acids (BCAA). Catalyzes an alkyl-migration followed by a ketol-acid reduction of (S)-2-acetolactate (S2AL) to yield (R)-2,3-dihydroxy-isovalerate. In the isomerase reaction, S2AL is rearranged via a Mg-dependent methyl migration to produce 3-hydroxy-3-methyl-2-ketobutyrate (HMKB). In the reductase reaction, this 2-ketoacid undergoes a metal-dependent reduction by NADPH to yield (R)-2,3-dihydroxy-isovalerate. This is Ketol-acid reductoisomerase (NADP(+)) from Citrobacter koseri (strain ATCC BAA-895 / CDC 4225-83 / SGSC4696).